A 129-amino-acid chain; its full sequence is Glycophorin-A (129 aa).

The signal sequence occupies residues 1–17 (MYEKIVIVLLLSGYIST). Glutamine 18 is subject to Pyrrolidone carboxylic acid. The Extracellular segment spans residues 18-82 (QDVTEIIPHE…QLVHIFSEPV (65 aa)). Residues serine 29 and serine 30 are each glycosylated (O-linked (GalNAc...) serine). O-linked (GalNAc...) threonine glycosylation occurs at threonine 34. O-linked (GalNAc...) serine glycosylation is present at serine 40. 2 O-linked (GalNAc...) threonine glycosylation sites follow: threonine 41 and threonine 48. An O-linked (GalNAc...) serine glycan is attached at serine 56. Residues 83–103 (IIGIIYAVMLGIIITILSIAF) traverse the membrane as a helical segment. The Cytoplasmic segment spans residues 104-129 (CIGQLTKKSSLPAQVASPEDVDPEVL).

Belongs to the glycophorin-A family. As to quaternary structure, homodimer. Component of the ankyrin-1 complex in the erythrocyte, composed of ANK1, RHCE, RHAG, SLC4A1, EPB42, GYPA, GYPB and AQP1. Interacts with SLC4A1; a GYPA monomer is bound at each end of the SLC4A1 dimer forming a heterotetramer.

Its subcellular location is the membrane. Component of the ankyrin-1 complex, a multiprotein complex involved in the stability and shape of the erythrocyte membrane. Glycophorin A is the major intrinsic membrane protein of the erythrocyte. The N-terminal glycosylated segment, which lies outside the erythrocyte membrane, has MN blood group receptors. Appears to be important for the function of SLC4A1 and is required for high activity of SLC4A1. May be involved in translocation of SLC4A1 to the plasma membrane. This is Glycophorin-A from Canis lupus familiaris (Dog).